We begin with the raw amino-acid sequence, 1077 residues long: MARLFSPRPPPSEDLFYETYYSLSQQYPLLILLLVIVLCALVALPAVAWASGRELTSDPSFLTTVLCALGGFSLLLGLASREQQLQRWTRPLSGLIWVALLALGYGFLFTGGVVSAWDQVSFFLFIIFTVYAMLPLGMRDAAAAGVISSLSHLLVLGLYLGWQPESQRALLPQLAANAVLFLCGNVVGAYHKALMERALRATFREALSSLHSRRRLDTEKKHQEHLLLSILPAYLAREMKAEIMARLQAGQRSRPENTNNFHSLYVKRHQGVSVLYADIVGFTRLASECSPKELVLMLNELFGKFDQIAKEHECMRIKILGDCYYCVSGLPLSLPDHAINCVRMGLDMCRAIRKLRVATGVDINMRVGVHSGSVLCGVIGLQKWQYDVWSHDVTLANHMEAGGVPGRVHITGATLALLAGAYAVERADTEHRDPYLRELGEPTYLVIDPRAEEEDEKGTAKGLLSSLEGHTMRPSLLMTRYLESWGAAKPFAHLSHLDSPVSTSTPLPEKAFSPQWSLDRSRTPRGLDDELDTGDAKFFQVIEQLNSQKQWKQSKDFNLLTLYFREKEMEKQYRLSALPAFKYYAACTFLVFLSNFTIQMLVTTRPPALIITYSITFLLFFLLLFVCFSEHLTKCVQKGPKMLHWLPALSVLVATRPGFRVALGTATILLVFTMAIASLLFLPVSSDCLFLASNVSSVTFNASWEMPGSLPLISIPLISIPYSMHCCVLGFLSCSLFLHMSFELKLLLLLLWLVASCSLFLHSHAWLSDCLIARLYQSPSDSRPGVLKEPKLMGAIYFFIFFFTLLVLARQNEYYCRLDFLWKKKLRQEREETETMENLTRLLLENVLPAHVAPQFIGQNRRNEDLYHQSYECVCVLFASVPDFKEFYSESNINHEGLECLRLLNEIIADFDELLSKPKFSGVEKIKTIGSTYMAATGLNATSGQDTQQDSERSCSHLGTMVEFAVALGSKLGVINKHSFNNFRLRVGLNHGPVVAGVIGAQKPQYDIWGNTVNVASRMESTGVLGKIQVTEETARALQSLGYTCYSRGSIKVKGKGELCTYFLNTDLTRTGSPSAS.

Residues 1–28 lie on the Cytoplasmic side of the membrane; it reads MARLFSPRPPPSEDLFYETYYSLSQQYP. A run of 6 helical transmembrane segments spans residues 29–50, 61–80, 94–117, 120–138, 141–162, and 170–190; these read LLIL…VAWA, FLTT…GLAS, GLIW…VSAW, VSFF…PLGM, AAAA…YLGW, and LLPQ…VGAY. The Cytoplasmic portion of the chain corresponds to 191–582; the sequence is HKALMERALR…YRLSALPAFK (392 aa). Positions 278, 279, and 322 each coordinate Mg(2+). ATP is bound by residues 278–283, 320–322, and Arg366; these read DIVGFT and LGD. The segment at 503-524 is disordered; sequence TSTPLPEKAFSPQWSLDRSRTP. Ser517 carries the phosphoserine modification. Thr533 bears the Phosphothreonine mark. 3 helical membrane-spanning segments follow: residues 583 to 604, 608 to 630, and 661 to 684; these read YYAA…LVTT, ALII…CFSE, and VALG…FLPV. Over 685–717 the chain is Extracellular; sequence SSDCLFLASNVSSVTFNASWEMPGSLPLISIPL. 2 N-linked (GlcNAc...) asparagine glycosylation sites follow: Asn694 and Asn701. The next 3 membrane-spanning stretches (helical) occupy residues 718–738, 746–766, and 793–809; these read ISIP…SLFL, LLLL…SHAW, and MGAI…LVLA. The Cytoplasmic segment spans residues 810–1077; sequence RQNEYYCRLD…LTRTGSPSAS (268 aa). Residues Lys927, 1007-1009, 1014-1018, and Lys1054 each bind ATP; these read DIW and NVASR.

Belongs to the adenylyl cyclase class-4/guanylyl cyclase family. Mg(2+) serves as cofactor. The cofactor is Mn(2+).

It is found in the cell membrane. The protein resides in the cytoplasm. The catalysed reaction is ATP = 3',5'-cyclic AMP + diphosphate. Activated by forskolin. Insensitive to calcium/calmodulin. Stimulated by GNAS and by the G-protein beta and gamma subunit complex. Functionally, catalyzes the formation of the signaling molecule cAMP in response to G-protein signaling. The sequence is that of Adenylate cyclase type 4 (Adcy4) from Mus musculus (Mouse).